Here is a 326-residue protein sequence, read N- to C-terminus: ELMO domain-containing protein 1 (326 aa).

The ELMO domain occupies 133–306 (QHEEMLLKLW…KFRKRIIKQL (174 aa)).

Acts as a GTPase-activating protein (GAP) toward guanine nucleotide exchange factors like ARL2, ARL3, ARF1 and ARF6, but not for GTPases outside the Arf family. This chain is ELMO domain-containing protein 1 (Elmod1), found in Mus musculus (Mouse).